The following is a 266-amino-acid chain: Large ribosomal subunit protein eL8 (266 aa).

Positions P104–T130 are enriched in basic and acidic residues. The tract at residues P104–V135 is disordered.

Belongs to the eukaryotic ribosomal protein eL8 family. As to quaternary structure, component of the large ribosomal subunit.

It localises to the cytoplasm. Functionally, component of the large ribosomal subunit. The ribosome is a large ribonucleoprotein complex responsible for the synthesis of proteins in the cell. The sequence is that of Large ribosomal subunit protein eL8 (RPL7A) from Gallus gallus (Chicken).